A 162-amino-acid polypeptide reads, in one-letter code: Functional amyloid chaperone FapA (162 aa).

Residues 1–28 (MSGSSLRIVVPALLVIVGSVPVSLPAHA) form the signal peptide.

The protein belongs to the FapA family. In terms of assembly, monomer in solution. Interacts with FapC but not FapB in vitro.

The protein localises to the periplasm. An intrinsically disordered chaperone for fibril amyloid FapC that guards against fibrillation within the periplasm. Upon overexpression of the endogenous six-gene locus (fapA-fapF), cells form large clumps during liquid growth, make large amounts of biofilm and produce amyloid fibrils. The chain is Functional amyloid chaperone FapA from Pseudomonas aeruginosa (strain ATCC 15692 / DSM 22644 / CIP 104116 / JCM 14847 / LMG 12228 / 1C / PRS 101 / PAO1).